The primary structure comprises 223 residues: UPF0758 protein Cvib_1178 (223 aa).

Residues 100-222 (KIQGARDVYE…WYSFRENNQL (123 aa)) form the MPN domain. 3 residues coordinate Zn(2+): histidine 171, histidine 173, and aspartate 184. The JAMM motif motif lies at 171-184 (HNHPSGDTEPSNAD).

This sequence belongs to the UPF0758 family.

In Chlorobium phaeovibrioides (strain DSM 265 / 1930) (Prosthecochloris vibrioformis (strain DSM 265)), this protein is UPF0758 protein Cvib_1178.